The chain runs to 95 residues: uncharacterized protein (95 aa).

Belongs to the asfivirus DP96R family.

This is an uncharacterized protein from African swine fever virus (isolate Warthog/Namibia/Wart80/1980) (ASFV).